The sequence spans 444 residues: Methylenetetrahydrofolate--tRNA-(uracil-5-)-methyltransferase TrmFO (444 aa).

10 to 15 (GAGLAG) is a binding site for FAD.

The protein belongs to the MnmG family. TrmFO subfamily. FAD is required as a cofactor.

The protein localises to the cytoplasm. The enzyme catalyses uridine(54) in tRNA + (6R)-5,10-methylene-5,6,7,8-tetrahydrofolate + NADH + H(+) = 5-methyluridine(54) in tRNA + (6S)-5,6,7,8-tetrahydrofolate + NAD(+). It catalyses the reaction uridine(54) in tRNA + (6R)-5,10-methylene-5,6,7,8-tetrahydrofolate + NADPH + H(+) = 5-methyluridine(54) in tRNA + (6S)-5,6,7,8-tetrahydrofolate + NADP(+). Functionally, catalyzes the folate-dependent formation of 5-methyl-uridine at position 54 (M-5-U54) in all tRNAs. The chain is Methylenetetrahydrofolate--tRNA-(uracil-5-)-methyltransferase TrmFO from Streptococcus pneumoniae (strain 70585).